The primary structure comprises 73 residues: Cytoplasmic envelopment protein 3 (73 aa).

A lipid anchor (N-myristoyl glycine; by host) is attached at G2.

Belongs to the herpesviridae cytoplasmic envelopment protein 3 family. As to quaternary structure, interacts with cytoplasmic envelopment protein 2; this interaction is essential for the proper localization of each protein to the assembly complex and thus for the production of infectious virus. In terms of processing, myristoylation and palmitoylation (probably on one or more of the nearby cysteines at the N-terminus) enable membrane-binding and Golgi apparatus-specific targeting and are essential for efficient packaging. Post-translationally, phosphorylated. Phosphorylation does not seem to be required for recycling to the host Golgi apparatus. Packaging is selective for underphosphorylated forms.

Its subcellular location is the virion tegument. The protein localises to the virion membrane. The protein resides in the host cell membrane. It localises to the host Golgi apparatus membrane. Its function is as follows. Plays an important role in the cytoplasmic envelopment of tegument proteins and capsids during the assembly and egress processes. Also participates in viral entry at the fusion step probably by regulating the core fusion machinery. This Homo sapiens (Human) protein is Cytoplasmic envelopment protein 3 (U71).